We begin with the raw amino-acid sequence, 134 residues long: DNA-directed RNA polymerase subunit omega (134 aa).

Belongs to the RNA polymerase subunit omega family. As to quaternary structure, the RNAP catalytic core consists of 2 alpha, 1 beta, 1 beta' and 1 omega subunit. When a sigma factor is associated with the core the holoenzyme is formed, which can initiate transcription.

It catalyses the reaction RNA(n) + a ribonucleoside 5'-triphosphate = RNA(n+1) + diphosphate. Promotes RNA polymerase assembly. Latches the N- and C-terminal regions of the beta' subunit thereby facilitating its interaction with the beta and alpha subunits. The polypeptide is DNA-directed RNA polymerase subunit omega (Rhizobium etli (strain CIAT 652)).